A 167-amino-acid polypeptide reads, in one-letter code: Leptin (167 aa).

The first 21 residues, 1–21 (MRCGPLCRFLWLWPYLSCVEA), serve as a signal peptide directing secretion. Cysteines 117 and 167 form a disulfide.

The protein belongs to the leptin family.

It is found in the secreted. In terms of biological role, key player in the regulation of energy balance and body weight control. Once released into the circulation, has central and peripheral effects by binding LEPR, found in many tissues, which results in the activation of several major signaling pathways. In the hypothalamus, acts as an appetite-regulating factor that induces a decrease in food intake and an increase in energy consumption by inducing anorexinogenic factors and suppressing orexigenic neuropeptides, also regulates bone mass and secretion of hypothalamo-pituitary-adrenal hormones. In the periphery, increases basal metabolism, influences reproductive function, regulates pancreatic beta-cell function and insulin secretion, is pro-angiogenic for endothelial cell and affects innate and adaptive immunity. In the arcuate nucleus of the hypothalamus, activates by depolarization POMC neurons inducing FOS and SOCS3 expression to release anorexigenic peptides and inhibits by hyperpolarization NPY neurons inducing SOCS3 with a consequent reduction on release of orexigenic peptides. In addition to its known satiety inducing effect, has a modulatory role in nutrient absorption. In the intestine, reduces glucose absorption by enterocytes by activating PKC and leading to a sequential activation of p38, PI3K and ERK signaling pathways which exerts an inhibitory effect on glucose absorption. Acts as a growth factor on certain tissues, through the activation of different signaling pathways increases expression of genes involved in cell cycle regulation such as CCND1, via JAK2-STAT3 pathway, or VEGFA, via MAPK1/3 and PI3K-AKT1 pathways. May also play an apoptotic role via JAK2-STAT3 pathway and up-regulation of BIRC5 expression. Pro-angiogenic, has mitogenic activity on vascular endothelial cells and plays a role in matrix remodeling by regulating the expression of matrix metalloproteinases (MMPs) and tissue inhibitors of metalloproteinases (TIMPs). In innate immunity, modulates the activity and function of neutrophils by increasing chemotaxis and the secretion of oxygen radicals. Increases phagocytosis by macrophages and enhances secretion of pro-inflammatory mediators. Increases cytotoxic ability of NK cells. Plays a pro-inflammatory role, in synergy with IL1B, by inducing NOS2 which promotes the production of IL6, IL8 and Prostaglandin E2, through a signaling pathway that involves JAK2, PI3K, MAP2K1/MEK1 and MAPK14/p38. In adaptive immunity, promotes the switch of memory T-cells towards T helper-1 cell immune responses. Increases CD4(+)CD25(-) T-cell proliferation and reduces autophagy during TCR (T-cell receptor) stimulation, through MTOR signaling pathway activation and BCL2 up-regulation. This is Leptin (LEP) from Canis lupus familiaris (Dog).